A 492-amino-acid polypeptide reads, in one-letter code: Monocarboxylate transporter 3 (492 aa).

The Cytoplasmic portion of the chain corresponds to 1–14; it reads MGAGGPRRGAGPPD. A helical membrane pass occupies residues 15–35; the sequence is GGWGWVVLGACFVVTGFAYGF. Residues 36–58 lie on the Extracellular side of the membrane; that stretch reads PKAVSVFFRELKRDFGAGYSDTA. A helical transmembrane segment spans residues 59-79; it reads WVSSIMLAMLYGTGPLSSILV. The Cytoplasmic segment spans residues 80 to 85; it reads TRFGCR. Residues 86–106 traverse the membrane as a helical segment; sequence PVMLAGGLLASAGMILASFAS. Residues 107–115 are Extracellular-facing; that stretch reads RLVELYLTA. The helical transmembrane segment at 116–136 threads the bilayer; that stretch reads GVLTGLGLALNFQPSLIMLGL. At 137 to 146 the chain is on the cytoplasmic side; that stretch reads YFERRRPLAN. Residues 147-167 traverse the membrane as a helical segment; it reads GLAAAGSPVFLSMLSPLGQLL. The Extracellular portion of the chain corresponds to 168 to 172; the sequence is GERFG. A helical transmembrane segment spans residues 173–193; sequence WRGGFLLFGGLLLHCCACGAV. The Cytoplasmic portion of the chain corresponds to 194–228; that stretch reads MRPPPGPPPRRDPSPHGGPARRRRLLDVAVCTDRA. A helical transmembrane segment spans residues 229-249; the sequence is FVVYVVTKFLMALGLFVPAIL. The Extracellular portion of the chain corresponds to 250 to 257; that stretch reads LVNYAKDA. Residues 258–278 traverse the membrane as a helical segment; it reads GVPDAEAAFLLSIVGFVDIVA. Over 279–293 the chain is Cytoplasmic; the sequence is RPACGALAGLGRLRP. The helical transmembrane segment at 294 to 314 threads the bilayer; sequence HVPYLFSLALLANGLTDLISA. Residues 315 to 318 lie on the Extracellular side of the membrane; it reads RARS. The chain crosses the membrane as a helical span at residues 319–339; the sequence is YGTLVAFCIAFGLSYGMVGAL. Over 340-352 the chain is Cytoplasmic; it reads QFEVLMATVGAPR. A helical transmembrane segment spans residues 353-373; it reads FPSALGLVLLVEAVAVLIGPP. Residues 374-386 lie on the Extracellular side of the membrane; the sequence is SAGRLVDALKNYE. Residues 387–407 traverse the membrane as a helical segment; that stretch reads IIFYLAGSEVALAGVFMAVTT. Topologically, residues 408 to 492 are cytoplasmic; the sequence is YCCLRCSKNI…GGHEARGQKA (85 aa). A disordered region spans residues 419–492; it reads SGRSAEGGAS…GGHEARGQKA (74 aa). Basolateral sorting signal regions lie at residues 426–460 and 461–482; these read GASDPEDVEAERDSEPMPASTEEPGSLEALEVLSP and RAGSPEQEPEEEAVPELDHESI. Residues 476–492 show a composition bias toward basic and acidic residues; sequence ELDHESIGGHEARGQKA.

This sequence belongs to the major facilitator superfamily. Monocarboxylate porter (TC 2.A.1.13) family. In terms of tissue distribution, expressed exclusively in retinal pigment epithelium and choroid plexus epithelium.

The protein localises to the basolateral cell membrane. The catalysed reaction is (S)-lactate(in) + H(+)(in) = (S)-lactate(out) + H(+)(out). Probable retinal pigment epithelium (RPE)-specific proton-coupled L-lactate transporter. May facilitate transport of lactate and H(+) out of the retina and could therefore play an essential role in maintenance of metabolic and ionic homeostasis of the outer retina. In Mus musculus (Mouse), this protein is Monocarboxylate transporter 3 (Slc16a8).